Consider the following 253-residue polypeptide: Maleate isomerase (253 aa).

Residues N14, C80–V82, Y137, and N167 each bind substrate. C80 acts as the Nucleophile in catalysis. An S-(2-succinyl)cysteine modification is found at C80. C198 acts as the Proton donor in catalysis. V199–Q200 contributes to the substrate binding site.

This sequence belongs to the maleate isomerase family. As to quaternary structure, homodimer.

It catalyses the reaction maleate = fumarate. Its function is as follows. Catalyzes cis-trans isomerization of the C2-C3 double bond in maleate to yield fumarate. The polypeptide is Maleate isomerase (Alcaligenes faecalis).